Reading from the N-terminus, the 143-residue chain is Flagellar assembly factor FliW (143 aa).

Belongs to the FliW family. In terms of assembly, interacts with translational regulator CsrA and flagellin(s).

Its subcellular location is the cytoplasm. In terms of biological role, acts as an anti-CsrA protein, binds CsrA and prevents it from repressing translation of its target genes, one of which is flagellin. Binds to flagellin and participates in the assembly of the flagellum. The polypeptide is Flagellar assembly factor FliW (Bacillus velezensis (strain DSM 23117 / BGSC 10A6 / LMG 26770 / FZB42) (Bacillus amyloliquefaciens subsp. plantarum)).